The following is a 97-amino-acid chain: HssA/B-like protein 32 (97 aa).

2 disordered regions span residues 1–23 (MTLF…SLAS) and 62–97 (AKSS…GSCS). Residues 62-74 (AKSSGGSCGGKGG) show a composition bias toward gly residues. Residues 75–88 (SHNHGHGHGPHGHG) are compositionally biased toward basic residues.

It belongs to the hssA/B family.

The sequence is that of HssA/B-like protein 32 (hssl32) from Dictyostelium discoideum (Social amoeba).